A 379-amino-acid chain; its full sequence is tRNA-specific 2-thiouridylase MnmA (379 aa).

ATP contacts are provided by residues 9-16 (AMSGGVDS) and M35. The segment at 94 to 96 (NPD) is interaction with target base in tRNA. C99 acts as the Nucleophile in catalysis. A disulfide bridge links C99 with C195. G123 lines the ATP pocket. Residues 145–147 (KDQ) are interaction with tRNA. The active-site Cysteine persulfide intermediate is the C195. Positions 307–308 (RY) are interaction with tRNA.

Belongs to the MnmA/TRMU family.

It is found in the cytoplasm. It catalyses the reaction S-sulfanyl-L-cysteinyl-[protein] + uridine(34) in tRNA + AH2 + ATP = 2-thiouridine(34) in tRNA + L-cysteinyl-[protein] + A + AMP + diphosphate + H(+). In terms of biological role, catalyzes the 2-thiolation of uridine at the wobble position (U34) of tRNA, leading to the formation of s(2)U34. This chain is tRNA-specific 2-thiouridylase MnmA, found in Xylella fastidiosa (strain M12).